The chain runs to 489 residues: Protein DETOXIFICATION 26 (489 aa).

The next 12 helical transmembrane spans lie at 42 to 62, 75 to 95, 125 to 145, 157 to 177, 190 to 210, 217 to 237, 271 to 291, 300 to 320, 342 to 362, 385 to 405, 416 to 436, and 442 to 462; these read IWYI…ILII, LAAI…LLLG, IILF…TPIL, LTGT…FFFP, VIAI…WFFV, IIGT…ILFL, IMLC…GNLV, LSIC…FFAG, IVSI…IVIF, VLLA…GVAV, INLG…GWIF, and GIWA…LIII.

This sequence belongs to the multi antimicrobial extrusion (MATE) (TC 2.A.66.1) family.

The protein localises to the membrane. The polypeptide is Protein DETOXIFICATION 26 (Arabidopsis thaliana (Mouse-ear cress)).